The following is a 380-amino-acid chain: Cytochrome b (380 aa).

The next 4 helical transmembrane spans lie at 34 to 54 (FGSLLGICLLTQILTGLLLAT), 78 to 99 (WLIRNLHANGASFFFICIYLHI), 114 to 134 (WNTGVILLLALMATAFVGYVL), and 179 to 199 (FFALHFLLPFMIAGLALIHLT). Positions 84 and 98 each coordinate heme b. Heme b-binding residues include H183 and H197. H202 contributes to the a ubiquinone binding site. 4 consecutive transmembrane segments (helical) span residues 227–247 (LKDILGFIIMFLPLTTLALFS), 289–309 (LGGVLALAASVLVLFLAPLLH), 321–341 (FSQFLFWTLAANLFILTWVGS), and 348–368 (FIIIGQLASLTYFTILLLLFP).

The protein belongs to the cytochrome b family. As to quaternary structure, the cytochrome bc1 complex contains 11 subunits: 3 respiratory subunits (MT-CYB, CYC1 and UQCRFS1), 2 core proteins (UQCRC1 and UQCRC2) and 6 low-molecular weight proteins (UQCRH/QCR6, UQCRB/QCR7, UQCRQ/QCR8, UQCR10/QCR9, UQCR11/QCR10 and a cleavage product of UQCRFS1). This cytochrome bc1 complex then forms a dimer. The cofactor is heme b.

Its subcellular location is the mitochondrion inner membrane. Its function is as follows. Component of the ubiquinol-cytochrome c reductase complex (complex III or cytochrome b-c1 complex) that is part of the mitochondrial respiratory chain. The b-c1 complex mediates electron transfer from ubiquinol to cytochrome c. Contributes to the generation of a proton gradient across the mitochondrial membrane that is then used for ATP synthesis. The protein is Cytochrome b (MT-CYB) of Alca torda (Razorbill).